A 275-amino-acid polypeptide reads, in one-letter code: Thiazole synthase (275 aa).

K108 (schiff-base intermediate with DXP) is an active-site residue. Residues G169, 196-197 (AG), and 218-219 (NT) each bind 1-deoxy-D-xylulose 5-phosphate.

It belongs to the ThiG family. As to quaternary structure, homotetramer. Forms heterodimers with either ThiH or ThiS.

The protein resides in the cytoplasm. The enzyme catalyses [ThiS sulfur-carrier protein]-C-terminal-Gly-aminoethanethioate + 2-iminoacetate + 1-deoxy-D-xylulose 5-phosphate = [ThiS sulfur-carrier protein]-C-terminal Gly-Gly + 2-[(2R,5Z)-2-carboxy-4-methylthiazol-5(2H)-ylidene]ethyl phosphate + 2 H2O + H(+). Its pathway is cofactor biosynthesis; thiamine diphosphate biosynthesis. Its function is as follows. Catalyzes the rearrangement of 1-deoxy-D-xylulose 5-phosphate (DXP) to produce the thiazole phosphate moiety of thiamine. Sulfur is provided by the thiocarboxylate moiety of the carrier protein ThiS. In vitro, sulfur can be provided by H(2)S. The chain is Thiazole synthase from Ralstonia pickettii (strain 12J).